The chain runs to 1663 residues: TPR repeat-containing protein DDB_G0287407 (1663 aa).

Disordered stretches follow at residues 84–109 (RKTQ…QKGQ) and 326–359 (SEYS…NSNQ). The segment covering 89 to 105 (TSSNGSTSTTTTTTTTT) has biased composition (low complexity). Positions 333–352 (DDGENDQSDDDDDNEDDDDF) are enriched in acidic residues. 6 TPR repeats span residues 1110-1143 (SDVW…YINN), 1150-1183 (AKVD…YTKE), 1192-1225 (AITL…CESK), 1234-1269 (ADIA…TESK), 1278-1311 (ARIL…YEAR), and 1320-1353 (SQIL…TKKI). 2 disordered regions span residues 1500–1528 (VAQP…QQQR) and 1544–1571 (QKVS…RQNT). Positions 1516–1547 (RTQQAIQQGQQQRQQVQQQQQQVQQQMSQKVS) form a coiled coil. 2 stretches are compositionally biased toward low complexity: residues 1518–1528 (QQAIQQGQQQR) and 1544–1563 (QKVS…QPSQ).

This is TPR repeat-containing protein DDB_G0287407 from Dictyostelium discoideum (Social amoeba).